The chain runs to 312 residues: Taste receptor type 2 member 7 (312 aa).

Residues M1–L9 are Extracellular-facing. The chain crosses the membrane as a helical span at residues M10 to V30. The Cytoplasmic portion of the chain corresponds to N31–S49. A helical membrane pass occupies residues S50 to V70. The Extracellular segment spans residues Q71–T101. Residues C102 to I122 form a helical membrane-spanning segment. Residues K123–K128 lie on the Cytoplasmic side of the membrane. The chain crosses the membrane as a helical span at residues L129–T149. At E150–N187 the chain is on the extracellular side. Residues N151 and N167 are each glycosylated (N-linked (GlcNAc...) asparagine). The chain crosses the membrane as a helical span at residues L188–L208. Residues W209–K235 lie on the Cytoplasmic side of the membrane. A helical membrane pass occupies residues A236–S256. Topologically, residues S257–A266 are extracellular. The chain crosses the membrane as a helical span at residues V267–L287. Topologically, residues G288 to Y312 are cytoplasmic.

It belongs to the G-protein coupled receptor T2R family. Expressed in subsets of taste receptor cells of the tongue and palate epithelium and exclusively in gustducin-positive cells. Expressed in 15% taste bud cells in circumvallate and foliate papillae but only in 2% in fungiform papillae. Expressed in gastric and duodenal tissues.

The protein resides in the membrane. In terms of biological role, gustducin-coupled receptor implicated in the perception of bitter compounds in the oral cavity and the gastrointestinal tract. Signals through PLCB2 and the calcium-regulated cation channel TRPM5. In Mus musculus (Mouse), this protein is Taste receptor type 2 member 7 (Tas2r7).